The following is a 418-amino-acid chain: Histidine--tRNA ligase (418 aa).

Belongs to the class-II aminoacyl-tRNA synthetase family. In terms of assembly, homodimer.

The protein resides in the cytoplasm. The enzyme catalyses tRNA(His) + L-histidine + ATP = L-histidyl-tRNA(His) + AMP + diphosphate + H(+). The chain is Histidine--tRNA ligase from Thermoanaerobacter sp. (strain X514).